Here is a 315-residue protein sequence, read N- to C-terminus: Gamma-hemolysin component C (315 aa).

Positions 1-29 (MLKNKILATTLSVSLLAPLANPLLENAKA) are cleaved as a signal peptide.

Belongs to the aerolysin family. As to quaternary structure, toxicity requires sequential binding and synergistic association of a class S and a class F component which form heterooligomeric complexes. HlgC (class S) associates with HlgB (class F) thus forming an CB toxin.

Its function is as follows. Toxin that seems to act by forming pores in the membrane of the cell. Has a hemolytic and a leucotoxic activity. The polypeptide is Gamma-hemolysin component C (hlgC) (Staphylococcus aureus (strain MSSA476)).